The primary structure comprises 114 residues: Flagellar hook-basal body complex protein FliE (114 aa).

Belongs to the FliE family.

It is found in the bacterial flagellum basal body. This is Flagellar hook-basal body complex protein FliE from Desulfitobacterium hafniense (strain DSM 10664 / DCB-2).